We begin with the raw amino-acid sequence, 31 residues long: U6-ctenitoxin-Co1a (31 aa).

Intrachain disulfides connect Cys2/Cys18 and Cys9/Cys23.

Expressed by the venom gland.

The protein localises to the secreted. Functionally, antagonist of L-type calcium channels (Cav1/CACNA1). This Ctenus ornatus (Brazilian spider) protein is U6-ctenitoxin-Co1a.